Here is a 470-residue protein sequence, read N- to C-terminus: Poly(A) polymerase catalytic subunit (470 aa).

Catalysis depends on residues aspartate 192 and aspartate 194.

The protein belongs to the poxviridae poly(A) polymerase catalytic subunit family. As to quaternary structure, heterodimer of a large (catalytic) subunit and a small (regulatory) subunit.

It carries out the reaction RNA(n) + ATP = RNA(n)-3'-adenine ribonucleotide + diphosphate. Polymerase that creates the 3'-poly(A) tail of mRNA's. The sequence is that of Poly(A) polymerase catalytic subunit (PAPL) from Homo sapiens (Human).